The primary structure comprises 192 residues: Phosphomevalonate kinase (192 aa).

Residues 17–23 (KRKSGKD) and Arg141 each bind ATP. Asn170 contacts substrate. ATP contacts are provided by His171 and Gln180.

In terms of assembly, monomer.

Its subcellular location is the cytoplasm. The protein resides in the cytosol. It carries out the reaction (R)-5-phosphomevalonate + ATP = (R)-5-diphosphomevalonate + ADP. Its pathway is isoprenoid biosynthesis; isopentenyl diphosphate biosynthesis via mevalonate pathway; isopentenyl diphosphate from (R)-mevalonate: step 2/3. In terms of biological role, catalyzes the reversible ATP-dependent phosphorylation of mevalonate 5-phosphate to produce mevalonate diphosphate and ADP, a key step in the mevalonic acid mediated biosynthesis of isopentenyl diphosphate and other polyisoprenoid metabolites. This Mus musculus (Mouse) protein is Phosphomevalonate kinase (Pmvk).